The sequence spans 283 residues: Nudix hydrolase 6 (283 aa).

Residues 101 to 233 (SHRIGVGAFV…KKELFRFMAN (133 aa)) enclose the Nudix hydrolase domain. Positions 139–160 (GVVKEGENIWEGALREVEEETG) match the Nudix box motif. 3 residues coordinate a divalent metal cation: glutamate 154, glutamate 158, and glutamate 204.

This sequence belongs to the Nudix hydrolase family. Mg(2+) is required as a cofactor. The cofactor is Mn(2+). In terms of tissue distribution, expressed in stems and leaves. Weakly or not expressed in roots.

The catalysed reaction is ADP-D-ribose + H2O = D-ribose 5-phosphate + AMP + 2 H(+). It catalyses the reaction NAD(+) + H2O = beta-nicotinamide D-ribonucleotide + AMP + 2 H(+). The enzyme catalyses NADH + H2O = reduced beta-nicotinamide D-ribonucleotide + AMP + 2 H(+). Its function is as follows. Probably mediates the hydrolysis of some nucleoside diphosphate derivatives. In vitro, it can use both NADH and ADP-ribose as substrates; however the relevance of such substrates in vivo is unclear. The chain is Nudix hydrolase 6 from Arabidopsis thaliana (Mouse-ear cress).